Reading from the N-terminus, the 254-residue chain is Receptor expression-enhancing protein 2 (254 aa).

A run of 2 helical transmembrane segments spans residues M1–Y21 and Y35–T55. S152 carries the post-translational modification Phosphoserine. Residues L194–A254 are disordered. The span at P205–P219 shows a compositional bias: basic and acidic residues.

It belongs to the DP1 family. In terms of assembly, interacts with odorant receptor proteins.

It localises to the membrane. In terms of biological role, required for endoplasmic reticulum (ER) network formation, shaping and remodeling. May enhance the cell surface expression of odorant receptors. The polypeptide is Receptor expression-enhancing protein 2 (Reep2) (Mus musculus (Mouse)).